A 587-amino-acid polypeptide reads, in one-letter code: Tripartite motif-containing protein 29 (587 aa).

Residues 1 to 71 (MEGADACRSN…SGEGKSGLFS (71 aa)) form a disordered region. Phosphoserine is present on residues Ser21, Ser28, Ser58, and Ser104. Position 106 is a phosphotyrosine (Tyr106). The B box-type zinc finger occupies 220–260 (FEARKCPLHGKTMELFCQTDQTCICYLCMFQEHKNHSTVTV). Zn(2+)-binding residues include Cys225, His228, Cys247, and His252. Residues 259–348 (TVEEAKAEKE…AVDQVKVIVD (90 aa)) are a coiled coil. Thr476 is subject to Phosphothreonine. Residue Ser489 is modified to Phosphoserine.

Interacts with VIM and HINT1. Interacts with IKBKG/NEMO. Interacts with STING1.

It is found in the cytoplasm. The protein resides in the lysosome. Functionally, plays a crucial role in the regulation of macrophage activation in response to viral or bacterial infections within the respiratory tract. Mechanistically, TRIM29 interacts with IKBKG/NEMO in the lysosome where it induces its 'Lys-48' ubiquitination and subsequent degradation. In turn, the expression of type I interferons and the production of pro-inflammatory cytokines are inhibited. Additionally, induces the 'Lys-48' ubiquitination of STING1 in a similar way, leading to its degradation. This is Tripartite motif-containing protein 29 (Trim29) from Mus musculus (Mouse).